A 101-amino-acid chain; its full sequence is Putative pterin-4-alpha-carbinolamine dehydratase (101 aa).

This sequence belongs to the pterin-4-alpha-carbinolamine dehydratase family.

It catalyses the reaction (4aS,6R)-4a-hydroxy-L-erythro-5,6,7,8-tetrahydrobiopterin = (6R)-L-erythro-6,7-dihydrobiopterin + H2O. This Rhodopseudomonas palustris (strain BisB18) protein is Putative pterin-4-alpha-carbinolamine dehydratase.